A 435-amino-acid polypeptide reads, in one-letter code: Gamma-glutamyl phosphate reductase (435 aa).

Belongs to the gamma-glutamyl phosphate reductase family.

It is found in the cytoplasm. The catalysed reaction is L-glutamate 5-semialdehyde + phosphate + NADP(+) = L-glutamyl 5-phosphate + NADPH + H(+). Its pathway is amino-acid biosynthesis; L-proline biosynthesis; L-glutamate 5-semialdehyde from L-glutamate: step 2/2. Functionally, catalyzes the NADPH-dependent reduction of L-glutamate 5-phosphate into L-glutamate 5-semialdehyde and phosphate. The product spontaneously undergoes cyclization to form 1-pyrroline-5-carboxylate. The polypeptide is Gamma-glutamyl phosphate reductase (Synechococcus sp. (strain CC9605)).